The following is a 339-amino-acid chain: Ribosomal RNA small subunit methyltransferase C (339 aa).

It belongs to the methyltransferase superfamily. RsmC family. As to quaternary structure, monomer.

It localises to the cytoplasm. The enzyme catalyses guanosine(1207) in 16S rRNA + S-adenosyl-L-methionine = N(2)-methylguanosine(1207) in 16S rRNA + S-adenosyl-L-homocysteine + H(+). In terms of biological role, specifically methylates the guanine in position 1207 of 16S rRNA in the 30S particle. The polypeptide is Ribosomal RNA small subunit methyltransferase C (Aliivibrio fischeri (strain ATCC 700601 / ES114) (Vibrio fischeri)).